The sequence spans 376 residues: MANSANTNTVPKLYRSVIEDVINDVRDIFLDDGVDEQVLMELKTLWENKLMQSRAVDGFHSEEQQLLLQVQQQHQPQQQQHHHHHHHQQAQPQQTVPQQAQTQQVLIPASQQATAPQVIVPDSKLIQHMNASNMSAAATAATLALPAGVTPVQQILTNSGQLLQVVRAANGAQYIFQPQQSVVLQQQVIPQMQPGGVQAPVIQQVLAPLPGGISPQTGVIIQPQQILFTGNKTQVIPTTVAAPTPAQAQITATGQQQPQAQPAQTQAPLVLQVDGTGDTSSEEDEDEEEDYDDDEEEDKEKDGAEDGQVEEEPLNSEDDVSDEEGQELFDTENVVVCQYDKIHRSKNKWKFHLKDGIMNLNGRDYIFSKAIGDAEW.

Ala2 carries the N-acetylalanine modification. Low complexity-rich tracts occupy residues 69–79 (QVQQQHQPQQQ) and 89–105 (QAQP…TQQV). 3 disordered regions span residues 69–107 (QVQQ…QVLI), 247–266 (QAQI…AQTQ), and 274–329 (DGTG…QELF). Residues Ser280, Ser281, Ser316, and Ser321 each carry the phosphoserine; by TAF1 modification. Positions 280 to 329 (SSEEDEDEEEDYDDDEEEDKEKDGAEDGQVEEEPLNSEDDVSDEEGQELF) are enriched in acidic residues. Residues His343 and Arg344 each contribute to the DNA site.

This sequence belongs to the TFIIA subunit 1 family. TFIIA is a heterodimer of the large unprocessed subunit 1 and a small subunit gamma. It was originally believed to be a heterotrimer of an alpha (p35), a beta (p19) and a gamma subunit (p12). TFIIA forms a complex with TBP. Part of TBP-based Pol II pre-initiation complex (PIC), in which Pol II core assembles with general transcription factors and other specific initiation factors including GTF2E1, GTF2E2, GTF2F1, GTF2F2, TCEA1, ERCC2, ERCC3, GTF2H2, GTF2H3, GTF2H4, GTF2H5, GTF2A1, GTF2A2, GTF2B and TBP; this large multi-subunit PIC complex mediates DNA unwinding and targets Pol II core to the transcription start site where the first phosphodiester bond forms. The alpha and beta subunits are postranslationally produced from the precursor form by TASP1. The cleavage promotes proteasomal degradation.

Its subcellular location is the nucleus. TFIIA is a component of the transcription machinery of RNA polymerase II and plays an important role in transcriptional activation. TFIIA in a complex with TBP mediates transcriptional activity. The protein is Transcription initiation factor IIA subunit 1 (GTF2A1) of Homo sapiens (Human).